Here is a 362-residue protein sequence, read N- to C-terminus: MERIVVTLGERSYPITIASGLFNEPASFLPLKSGEQVMLVTSETLAPLYLDKVRGVLEQAGVNVDSVILPDGEQYKSLAVLDTVFTALLQKPHGRDTTLVALGGGVVGDLTGFAAASYQRGVRFIQVPTTLLSQVDSSVGGKTAVNHPLGKNMIGAFYQPASVVVDLDCLKTLPPRELASGLAEVIKYGIILDGAFFNWLEENLDALLRLDGPAMAYCIRRCCELKAEVVAADERETGLRALLNLGHTFGHAIEAEMGYGNWLHGEAVAAGMVMAARTSERLGQFSSAETQRIITLLTRAGLPVNGPREMSAQAYLPHMLRDKKVLAGEMRLILPLAIGKSKVRSGVSHELVLNAIADCQSA.

NAD(+) contacts are provided by residues 71-76, 105-109, 129-130, lysine 142, lysine 151, and 169-172; these read DGEQYK, GVVGD, TT, and CLKT. Glutamate 184, histidine 247, and histidine 264 together coordinate Zn(2+).

This sequence belongs to the sugar phosphate cyclases superfamily. Dehydroquinate synthase family. NAD(+) serves as cofactor. Co(2+) is required as a cofactor. It depends on Zn(2+) as a cofactor.

The protein localises to the cytoplasm. It carries out the reaction 7-phospho-2-dehydro-3-deoxy-D-arabino-heptonate = 3-dehydroquinate + phosphate. Its pathway is metabolic intermediate biosynthesis; chorismate biosynthesis; chorismate from D-erythrose 4-phosphate and phosphoenolpyruvate: step 2/7. Catalyzes the conversion of 3-deoxy-D-arabino-heptulosonate 7-phosphate (DAHP) to dehydroquinate (DHQ). This Shigella flexneri protein is 3-dehydroquinate synthase.